Reading from the N-terminus, the 152-residue chain is Xanthine-guanine phosphoribosyltransferase (152 aa).

5-phospho-alpha-D-ribose 1-diphosphate-binding positions include 37–38 (RG), arginine 69, and 88–96 (DDLVDSGDT). Arginine 69 contributes to the GMP binding site. Aspartate 89 contributes to the Mg(2+) binding site. Guanine-binding residues include aspartate 92 and isoleucine 135. 2 residues coordinate xanthine: aspartate 92 and isoleucine 135. Residues 92 to 96 (DSGDT) and 134 to 135 (WI) each bind GMP.

It belongs to the purine/pyrimidine phosphoribosyltransferase family. XGPT subfamily. In terms of assembly, homotetramer. Requires Mg(2+) as cofactor.

It is found in the cell inner membrane. It catalyses the reaction GMP + diphosphate = guanine + 5-phospho-alpha-D-ribose 1-diphosphate. The enzyme catalyses XMP + diphosphate = xanthine + 5-phospho-alpha-D-ribose 1-diphosphate. The catalysed reaction is IMP + diphosphate = hypoxanthine + 5-phospho-alpha-D-ribose 1-diphosphate. It participates in purine metabolism; GMP biosynthesis via salvage pathway; GMP from guanine: step 1/1. It functions in the pathway purine metabolism; XMP biosynthesis via salvage pathway; XMP from xanthine: step 1/1. Functionally, purine salvage pathway enzyme that catalyzes the transfer of the ribosyl-5-phosphate group from 5-phospho-alpha-D-ribose 1-diphosphate (PRPP) to the N9 position of the 6-oxopurines guanine and xanthine to form the corresponding ribonucleotides GMP (guanosine 5'-monophosphate) and XMP (xanthosine 5'-monophosphate), with the release of PPi. To a lesser extent, also acts on hypoxanthine. This Aliivibrio salmonicida (strain LFI1238) (Vibrio salmonicida (strain LFI1238)) protein is Xanthine-guanine phosphoribosyltransferase.